A 226-amino-acid polypeptide reads, in one-letter code: RPA-interacting protein A (226 aa).

An interaction with importin beta region spans residues 1–45; it reads MEAERRHRALYKGTTPPWKETYRKRCVERLKRNRSKLLDKFRQVG. The tract at residues 49–171 is interaction with RPA1; sequence HGGVGGSFLV…QCGVYINTQS (123 aa). The RIP-type zinc finger occupies 144–219; that stretch reads CPVCNRNYLT…ASLFMSCQEC (76 aa).

In terms of assembly, interacts directly with the rpa1 subunit of RPA complex. Interacts with importin beta, but not with importin alpha. Forms a complex with the RPA complex and importin beta, which is dissociated by Ran-GTP.

It localises to the nucleus. Its function is as follows. Mediates the import of RPA complex into the nucleus, via its interaction with importin beta. This is RPA-interacting protein A (rpain-a) from Xenopus laevis (African clawed frog).